The primary structure comprises 246 residues: O-antigen export system ATP-binding protein RfbB (246 aa).

In terms of domain architecture, ABC transporter spans 22–246 (SGIKDLIFHP…IIELYKQAMA (225 aa)). 63 to 70 (GRNGAGKS) serves as a coordination point for ATP.

It belongs to the ABC transporter superfamily.

It is found in the cell inner membrane. Its function is as follows. May form an ATP-driven O-antigen export apparatus, in association with RfbA. The protein is O-antigen export system ATP-binding protein RfbB (rfbB) of Klebsiella pneumoniae.